The primary structure comprises 389 residues: Alanine racemase (389 aa).

The active-site Proton acceptor; specific for D-alanine is Lys-48. N6-(pyridoxal phosphate)lysine is present on Lys-48. Arg-144 provides a ligand contact to substrate. Tyr-281 (proton acceptor; specific for L-alanine) is an active-site residue. Met-329 contacts substrate.

This sequence belongs to the alanine racemase family. Pyridoxal 5'-phosphate is required as a cofactor.

The catalysed reaction is L-alanine = D-alanine. The protein operates within amino-acid biosynthesis; D-alanine biosynthesis; D-alanine from L-alanine: step 1/1. Functionally, catalyzes the interconversion of L-alanine and D-alanine. May also act on other amino acids. In Leptospira interrogans serogroup Icterohaemorrhagiae serovar copenhageni (strain Fiocruz L1-130), this protein is Alanine racemase (alr).